Consider the following 162-residue polypeptide: MGSHPTPGLQRTTSAGYRLPPTRPPASVSPAARGGPMASRGLAGGCQAPQALKAQRVAQGAACDGVQQDQLWRELLEAERRGQQRWIQNWSFLKDYDPMGNKKEPEKLPDHVPLFSDTVPSSTNQVVGSRLDTPLGQTLIRMDFFFTEGARKKKLEDQMQPI.

Positions 1-44 are disordered; the sequence is MGSHPTPGLQRTTSAGYRLPPTRPPASVSPAARGGPMASRGLAG.

The protein localises to the cell projection. Its subcellular location is the cilium. The polypeptide is Ciliary microtubule inner protein 5 (Homo sapiens (Human)).